The chain runs to 350 residues: Pleckstrin (350 aa).

Residues 4–101 (KRIREGYLVK…WVRDIKKAIK (98 aa)) form the PH 1 domain. Lysine 64 bears the N6-acetyllysine mark. Residues serine 113 and serine 117 each carry the phosphoserine modification. The DEP domain occupies 136–221 (PEKGIKELNL…NPDAFYYFPD (86 aa)). The 104-residue stretch at 244–347 (IIIKQGCLLK…WIKAIQVASR (104 aa)) folds into the PH 2 domain.

In terms of biological role, major protein kinase C substrate of platelets. This chain is Pleckstrin (Plek), found in Rattus norvegicus (Rat).